The chain runs to 726 residues: ATP-dependent permease MDL1, mitochondrial (726 aa).

The N-terminal 112 residues, 1 to 112 (MDPIRFGLSR…LAFLKLCVRH (112 aa)), are a transit peptide targeting the mitochondrion. Residues Asn66, Asn113, and Asn132 are each glycosylated (N-linked (GlcNAc...) asparagine). Transmembrane regions (helical) follow at residues 158–178 (FFIA…IPYI), 196–216 (IMGI…FLGS), 306–326 (GYMS…GEYV), 386–406 (GIFF…ILAL), and 423–443 (SFLL…GCFT). The region spanning 158-447 (FFIAGSLLLV…LSGCFTDIMK (290 aa)) is the ABC transmembrane type-1 domain. Positions 482–719 (LSFRNVGFAY…GTNFYKLMRW (238 aa)) constitute an ABC transporter domain. Asn502 carries an N-linked (GlcNAc...) asparagine glycan. 517–524 (APSGGGKS) lines the ATP pocket. N-linked (GlcNAc...) asparagine glycans are attached at residues Asn584, Asn598, and Asn668.

Belongs to the ABC transporter superfamily. ABCB family. Mitochondrial peptide exporter (TC 3.A.1.212) subfamily.

The protein resides in the mitochondrion inner membrane. In terms of biological role, mediates export of peptides generated upon proteolysis of mitochondrial inner membrane proteins. The sequence is that of ATP-dependent permease MDL1, mitochondrial (mdl1) from Schizosaccharomyces pombe (strain 972 / ATCC 24843) (Fission yeast).